Here is a 203-residue protein sequence, read N- to C-terminus: Imidazoleglycerol-phosphate dehydratase (203 aa).

It belongs to the imidazoleglycerol-phosphate dehydratase family.

The protein resides in the cytoplasm. It catalyses the reaction D-erythro-1-(imidazol-4-yl)glycerol 3-phosphate = 3-(imidazol-4-yl)-2-oxopropyl phosphate + H2O. It functions in the pathway amino-acid biosynthesis; L-histidine biosynthesis; L-histidine from 5-phospho-alpha-D-ribose 1-diphosphate: step 6/9. In Salinispora tropica (strain ATCC BAA-916 / DSM 44818 / JCM 13857 / NBRC 105044 / CNB-440), this protein is Imidazoleglycerol-phosphate dehydratase.